The chain runs to 140 residues: Large ribosomal subunit protein bL17 (140 aa).

It belongs to the bacterial ribosomal protein bL17 family. Part of the 50S ribosomal subunit. Contacts protein L32.

The polypeptide is Large ribosomal subunit protein bL17 (Roseobacter denitrificans (strain ATCC 33942 / OCh 114) (Erythrobacter sp. (strain OCh 114))).